A 246-amino-acid polypeptide reads, in one-letter code: Phosphomannomutase 2 (246 aa).

N-acetylalanine is present on alanine 2. The active-site Nucleophile is aspartate 12. Positions 12 and 14 each coordinate Mg(2+). The active-site Proton donor/acceptor is aspartate 14. Alpha-D-mannose 1-phosphate is bound by residues arginine 21, arginine 123, arginine 134, and arginine 141. The residue at position 149 (lysine 149) is an N6-acetyllysine. Residues serine 179 and aspartate 181 each contribute to the alpha-D-mannose 1-phosphate site. Residues aspartate 209, phenylalanine 221, aspartate 223, and threonine 226 each contribute to the Mg(2+) site.

Belongs to the eukaryotic PMM family. As to quaternary structure, homodimer.

The protein resides in the cytoplasm. It catalyses the reaction alpha-D-mannose 1-phosphate = D-mannose 6-phosphate. It functions in the pathway nucleotide-sugar biosynthesis; GDP-alpha-D-mannose biosynthesis; alpha-D-mannose 1-phosphate from D-fructose 6-phosphate: step 2/2. Involved in the synthesis of the GDP-mannose and dolichol-phosphate-mannose required for a number of critical mannosyl transfer reactions. The chain is Phosphomannomutase 2 (PMM2) from Macaca fascicularis (Crab-eating macaque).